Here is a 452-residue protein sequence, read N- to C-terminus: MQRRIFGIETEFGVTCTFHGQRRLSPDEVARYLFRRVVSWGRSSNVFLRNGSRLYLDVGSHPEYATAECDDLAQLVSHDKAGERILEDLLVDAERRLADEGIGGDIFLFKNNTDSAGNSYGCHENYLVARAGEFSRIADVLLPFLVTRQLICGAGKVLQTPRGAVYCLSQRAEHIWEGVSSATTRSRPIINTRDEPHADAERYRRLHVIVGDSNMSEVTTLLKVGSANLVLEMIEQGVQFRDFSLDNPIRAIREISHDLTGRRTVKLAGGKEASALDIQREYYERAVEHVAKRSPDPMAERVLELWGRTLDAIAAQDLSKIDREIDWAIKHRLLERYQAKHDMDLSNPRIAQLDLAYHDIRRGRGVFDLLQRKGQVERVTDDGEIEAAKDTPPQTTRAKLRGDFIAAAQAAGRDFTVDWVHLKLNDQAQRTVLCKDPFRAVDERVERLIASL.

Position 9 (Glu-9) interacts with Mg(2+). Arg-53 is a binding site for ATP. Tyr-55 contributes to the Mg(2+) binding site. Asp-57 acts as the Proton acceptor in catalysis. Residue Glu-63 coordinates Mg(2+). ATP contacts are provided by Thr-66 and Trp-419.

The protein belongs to the Pup ligase/Pup deamidase family. Pup-conjugating enzyme subfamily.

The enzyme catalyses ATP + [prokaryotic ubiquitin-like protein]-L-glutamate + [protein]-L-lysine = ADP + phosphate + N(6)-([prokaryotic ubiquitin-like protein]-gamma-L-glutamyl)-[protein]-L-lysine.. The protein operates within protein degradation; proteasomal Pup-dependent pathway. Its pathway is protein modification; protein pupylation. Its function is as follows. Catalyzes the covalent attachment of the prokaryotic ubiquitin-like protein modifier Pup to the proteasomal substrate proteins, thereby targeting them for proteasomal degradation. This tagging system is termed pupylation. The ligation reaction involves the side-chain carboxylate of the C-terminal glutamate of Pup and the side-chain amino group of a substrate lysine. The polypeptide is Pup--protein ligase (Actinosynnema mirum (strain ATCC 29888 / DSM 43827 / JCM 3225 / NBRC 14064 / NCIMB 13271 / NRRL B-12336 / IMRU 3971 / 101)).